A 624-amino-acid chain; its full sequence is LRR receptor kinase BAK1 (624 aa).

An N-terminal signal peptide occupies residues 1–25; the sequence is MAAHRWAVWAVLLLRLLVPAARVLA. At 26 to 237 the chain is on the extracellular side; the sequence is NMEGDALHSL…QSPGSSSSTG (212 aa). LRR repeat units lie at residues 91-115, 117-139, 140-163, and 164-188; these read LKNLQYLELYSNNISGTIPSELGNL, NLVSLDLYLNNFTGPIPDSLGNL, LKLRFLRLNNNSLSGSIPKSLTAI, and TALQVLDLSNNNLSGEVPSTGSFSL. N-linked (GlcNAc...) asparagine glycosylation is found at Asn103, Asn114, Asn127, Asn149, and Asn175. Positions 205–236 are disordered; sequence TTKPCPGAPPFSPPPPYNPPTPVQSPGSSSST. Positions 210 to 227 are enriched in pro residues; that stretch reads PGAPPFSPPPPYNPPTPV. Residues 238–258 traverse the membrane as a helical segment; that stretch reads AIAGGVAAGAALLFAIPAIGF. At 259–624 the chain is on the cytoplasmic side; that stretch reads AWYRRRKPQE…LHAVELSGPR (366 aa). A Protein kinase domain is found at 301–588; it reads FSNKNILGRG…GLAERWEEWQ (288 aa). Residues 307 to 315 and Lys329 contribute to the ATP site; that span reads LGRGGFGKV. Asp428 acts as the Proton acceptor in catalysis.

It belongs to the protein kinase superfamily. Ser/Thr protein kinase family. In terms of assembly, forms homodimers. Interacts with BRI1. Interacts with REM4.1. In terms of tissue distribution, expressed in developing lateral roots, shoot apex, leaf blades, lamina joints and flowers. Expressed at low levels in leaf sheaths and panicles.

It localises to the cell membrane. It carries out the reaction L-seryl-[protein] + ATP = O-phospho-L-seryl-[protein] + ADP + H(+). The catalysed reaction is L-threonyl-[protein] + ATP = O-phospho-L-threonyl-[protein] + ADP + H(+). Functionally, LRR receptor kinase involved in defense response. Does not seem to be required specifically for XA21-mediated immunity or basal resistance to Xanthomonas oryzae pv. oryzae (Xoo), or immunity to Magnaporthe oryzae. Involved in brassinosteroid (BR) signaling pathway. Acts as a coreceptor of BRI1. Forms at the plasma membrane a receptor complex with BRI1 which is activated in response to brassinolide. Phosphorylates BRI1. Required for normal plant growth and leaf development. Possesses kinase activity in vitro. In Oryza sativa subsp. japonica (Rice), this protein is LRR receptor kinase BAK1.